The sequence spans 83 residues: RNA-binding protein Hfq (83 aa).

The region spanning 10–69 is the Sm domain; it reads DPFLNALRREHVPVSIYLVNGIKLQGQIESFDQYVVLLRNTVTQMVYKHAISTIVPGRAV.

Belongs to the Hfq family. In terms of assembly, homohexamer.

RNA chaperone that binds small regulatory RNA (sRNAs) and mRNAs to facilitate mRNA translational regulation in response to envelope stress, environmental stress and changes in metabolite concentrations. Also binds with high specificity to tRNAs. The sequence is that of RNA-binding protein Hfq from Paracidovorax citrulli (strain AAC00-1) (Acidovorax citrulli).